We begin with the raw amino-acid sequence, 174 residues long: Large ribosomal subunit protein uL16 (174 aa).

Belongs to the universal ribosomal protein uL16 family.

This is Large ribosomal subunit protein uL16 from Archaeoglobus fulgidus (strain ATCC 49558 / DSM 4304 / JCM 9628 / NBRC 100126 / VC-16).